The sequence spans 124 residues: Large ribosomal subunit protein bL17 (124 aa).

It belongs to the bacterial ribosomal protein bL17 family. As to quaternary structure, part of the 50S ribosomal subunit. Contacts protein L32.

This chain is Large ribosomal subunit protein bL17, found in Mycoplasma pneumoniae (strain ATCC 29342 / M129 / Subtype 1) (Mycoplasmoides pneumoniae).